Consider the following 40-residue polypeptide: Alpha-conotoxin-like Qc1.4b (40 aa).

Residues 1-19 (SDGRNTAANDKASDLMALR) constitute a propeptide that is removed on maturation. 2 disulfide bridges follow: C22–C28 and C23–C36. Residues 24 to 26 (PNP) are lacks the Ser-Xaa-Pro motif that is crucial for potent interaction with nAChR. C36 bears the Cysteine amide mark. Positions 37-40 (GGGR) are excised as a propeptide.

Belongs to the conotoxin A superfamily. Expressed by the venom duct.

Its subcellular location is the secreted. Functionally, alpha-conotoxins act on postsynaptic membranes, they bind to the nicotinic acetylcholine receptors (nAChR) and thus inhibit them. Has possibly a distinct nAChR binding mode from other alpha-conotoxins, due to a different three residue motif (lacks the Ser-Xaa-Pro motif). This Conus quercinus (Oak cone) protein is Alpha-conotoxin-like Qc1.4b.